We begin with the raw amino-acid sequence, 261 residues long: tRNA U34 carboxymethyltransferase (261 aa).

Residues Lys25, Trp39, Lys44, Gly63, 114–115, Tyr135, and Arg250 each bind carboxy-S-adenosyl-L-methionine; that span reads VE.

This sequence belongs to the class I-like SAM-binding methyltransferase superfamily. CmoB family. In terms of assembly, homotetramer.

It catalyses the reaction carboxy-S-adenosyl-L-methionine + 5-hydroxyuridine(34) in tRNA = 5-carboxymethoxyuridine(34) in tRNA + S-adenosyl-L-homocysteine + H(+). In terms of biological role, catalyzes carboxymethyl transfer from carboxy-S-adenosyl-L-methionine (Cx-SAM) to 5-hydroxyuridine (ho5U) to form 5-carboxymethoxyuridine (cmo5U) at position 34 in tRNAs. The sequence is that of tRNA U34 carboxymethyltransferase from Helicobacter pylori (strain Shi470).